The primary structure comprises 238 residues: Ribonuclease PH (238 aa).

Phosphate contacts are provided by residues arginine 86 and 124 to 126; that span reads GTR.

It belongs to the RNase PH family. As to quaternary structure, homohexameric ring arranged as a trimer of dimers.

It catalyses the reaction tRNA(n+1) + phosphate = tRNA(n) + a ribonucleoside 5'-diphosphate. Functionally, phosphorolytic 3'-5' exoribonuclease that plays an important role in tRNA 3'-end maturation. Removes nucleotide residues following the 3'-CCA terminus of tRNAs; can also add nucleotides to the ends of RNA molecules by using nucleoside diphosphates as substrates, but this may not be physiologically important. Probably plays a role in initiation of 16S rRNA degradation (leading to ribosome degradation) during starvation. This chain is Ribonuclease PH, found in Mannheimia haemolytica (Pasteurella haemolytica).